The following is a 45-amino-acid chain: Osteocalcin (45 aa).

The Gla domain occupies 1 to 41 (AAGELTLTQLESLREVCEANLACEDMMDAQGIIAAYTAYYG). Ca(2+) contacts are provided by Glu-11, Glu-15, Glu-18, and Glu-24. Residues Glu-11, Glu-15, and Glu-18 each carry the 4-carboxyglutamate modification. An intrachain disulfide couples Cys-17 to Cys-23.

This sequence belongs to the osteocalcin/matrix Gla protein family. Post-translationally, gamma-carboxyglutamate residues are formed by vitamin K dependent carboxylation by GGCX. These residues are essential for the binding of calcium. Also found in smaller quantities in dentin.

Its subcellular location is the secreted. Functionally, the carboxylated form is one of the main organic components of the bone matrix, which constitutes 1-2% of the total bone protein. The carboxylated form binds strongly to apatite and calcium. This Lepomis macrochirus (Bluegill) protein is Osteocalcin (bglap).